Reading from the N-terminus, the 541-residue chain is Methyl-accepting chemotaxis protein PcaY (541 aa).

The Cytoplasmic segment spans residues 1-10 (MLANLKIRTG). Residues 11–31 (MFWVLSLFSLTLLFSTASAWW) form a helical membrane-spanning segment. At 32–189 (AAVGSDQQIT…ESDRRLARAQ (158 aa)) the chain is on the periplasmic side. Residues 35–187 (GSDQQITELD…MLESDRRLAR (153 aa)) form a ligand-binding domain region. The chain crosses the membrane as a helical span at residues 190–210 (LLSLCLLGMTVVLAVLCWAFI). The Cytoplasmic segment spans residues 211–541 (AQRVLHPLRE…MTALVGRFKV (331 aa)). Residues 212–264 (QRVLHPLREAGGHFRRIASGDLSVPVQGQGNNEIGQLFHELQRMQQSQRDTLG) form the HAMP domain. Residues 269–505 (CARQLDAAAS…EVDRNLLNIR (237 aa)) enclose the Methyl-accepting transducer domain. The tract at residues 322–341 (TSQTTSESNQLAAQSRRQVS) is disordered.

Belongs to the methyl-accepting chemotaxis (MCP) protein family.

The protein localises to the cell inner membrane. Its function is as follows. Chemotactic-signal transducers respond to changes in the concentration of attractants and repellents in the environment, transduce a signal from the outside to the inside of the cell, and facilitate sensory adaptation through the variation of the level of methylation. PcaY is responsible for the detection of multiple aromatic and hydroaromatic compounds that are metabolized through the beta-ketoadipate catabolic pathway, including vanillin, vanillate, 4-hydroxybenzoate (4-HBA), benzoate and protocatechuate. It also senses several nonmetabolizable aromatic compounds. The chain is Methyl-accepting chemotaxis protein PcaY from Pseudomonas putida (strain ATCC 700007 / DSM 6899 / JCM 31910 / BCRC 17059 / LMG 24140 / F1).